Here is an 86-residue protein sequence, read N- to C-terminus: Large ribosomal subunit protein bL27 (86 aa).

Residues 1–21 (MAHKKGASSSRNGRDSAAQRL) form a disordered region.

This sequence belongs to the bacterial ribosomal protein bL27 family.

The chain is Large ribosomal subunit protein bL27 (rpmA) from Mycobacterium tuberculosis (strain CDC 1551 / Oshkosh).